The following is a 162-amino-acid chain: Probable chemoreceptor glutamine deamidase CheD (162 aa).

Belongs to the CheD family.

The enzyme catalyses L-glutaminyl-[protein] + H2O = L-glutamyl-[protein] + NH4(+). Functionally, probably deamidates glutamine residues to glutamate on methyl-accepting chemotaxis receptors (MCPs), playing an important role in chemotaxis. The sequence is that of Probable chemoreceptor glutamine deamidase CheD from Syntrophotalea carbinolica (strain DSM 2380 / NBRC 103641 / GraBd1) (Pelobacter carbinolicus).